The following is a 180-amino-acid chain: Protein Flattop (180 aa).

A disordered region spans residues 111 to 180 (PQISGKASGK…AGDKVLQAQS (70 aa)).

It belongs to the Flattop family.

The protein resides in the cytoplasm. It is found in the cytoskeleton. It localises to the cilium basal body. The protein localises to the cell projection. Its subcellular location is the cilium. The protein resides in the apical cell membrane. It is found in the cilium axoneme. Microtubule inner protein (MIP) part of the dynein-decorated doublet microtubules (DMTs) in cilia axoneme. Acts as a regulator of cilium basal body docking and positioning in mono- and multiciliated cells. Regulates basal body docking and cilia formation in multiciliated lung cells. Regulates kinocilium positioning and stereocilia bundle morphogenesis in the inner ear. The polypeptide is Protein Flattop (Xenopus laevis (African clawed frog)).